A 100-amino-acid chain; its full sequence is Large ribosomal subunit protein uL23 (100 aa).

The protein belongs to the universal ribosomal protein uL23 family. As to quaternary structure, part of the 50S ribosomal subunit. Contacts protein L29, and trigger factor when it is bound to the ribosome.

One of the early assembly proteins it binds 23S rRNA. One of the proteins that surrounds the polypeptide exit tunnel on the outside of the ribosome. Forms the main docking site for trigger factor binding to the ribosome. This is Large ribosomal subunit protein uL23 from Sodalis glossinidius (strain morsitans).